Here is a 236-residue protein sequence, read N- to C-terminus: 15,16-dihydrobiliverdin:ferredoxin oxidoreductase (236 aa).

Belongs to the HY2 family.

The enzyme catalyses 15,16-dihydrobiliverdin + oxidized 2[4Fe-4S]-[ferredoxin] = biliverdin IXalpha + reduced 2[4Fe-4S]-[ferredoxin] + 2 H(+). In terms of biological role, catalyzes the two-electron reduction of biliverdin IX-alpha at the C15 methine bridge. This is 15,16-dihydrobiliverdin:ferredoxin oxidoreductase from Prochlorococcus marinus (strain AS9601).